A 214-amino-acid chain; its full sequence is Histidine biosynthesis bifunctional protein HisIE (214 aa).

The segment at 1-114 (MDLSAVRFDE…LEGEKDLGFV (114 aa)) is phosphoribosyl-AMP cyclohydrolase. The segment at 115 to 214 (VGQVYATIKE…RSPYDGSHGN (100 aa)) is phosphoribosyl-ATP pyrophosphohydrolase.

This sequence in the N-terminal section; belongs to the PRA-CH family. In the C-terminal section; belongs to the PRA-PH family.

It is found in the cytoplasm. The enzyme catalyses 1-(5-phospho-beta-D-ribosyl)-ATP + H2O = 1-(5-phospho-beta-D-ribosyl)-5'-AMP + diphosphate + H(+). It carries out the reaction 1-(5-phospho-beta-D-ribosyl)-5'-AMP + H2O = 1-(5-phospho-beta-D-ribosyl)-5-[(5-phospho-beta-D-ribosylamino)methylideneamino]imidazole-4-carboxamide. The protein operates within amino-acid biosynthesis; L-histidine biosynthesis; L-histidine from 5-phospho-alpha-D-ribose 1-diphosphate: step 2/9. It participates in amino-acid biosynthesis; L-histidine biosynthesis; L-histidine from 5-phospho-alpha-D-ribose 1-diphosphate: step 3/9. This Thermus thermophilus (strain ATCC BAA-163 / DSM 7039 / HB27) protein is Histidine biosynthesis bifunctional protein HisIE.